The chain runs to 147 residues: 3-dehydroquinate dehydratase (147 aa).

Residue Tyr-23 is the Proton acceptor of the active site. Substrate is bound by residues Asn-74, His-80, and Asp-87. His-100 functions as the Proton donor in the catalytic mechanism. Substrate-binding positions include Leu-101–Ser-102 and Arg-111.

It belongs to the type-II 3-dehydroquinase family. Homododecamer.

The catalysed reaction is 3-dehydroquinate = 3-dehydroshikimate + H2O. Its pathway is metabolic intermediate biosynthesis; chorismate biosynthesis; chorismate from D-erythrose 4-phosphate and phosphoenolpyruvate: step 3/7. Functionally, catalyzes a trans-dehydration via an enolate intermediate. The protein is 3-dehydroquinate dehydratase of Clostridium botulinum (strain Kyoto / Type A2).